Here is a 387-residue protein sequence, read N- to C-terminus: EARP and GARP complex-interacting protein 1 (387 aa).

An N-acetylmethionine modification is found at Met1. WD repeat units lie at residues 4–48 (DAPV…IIDF), 55–101 (INKN…VWRM), 124–164 (ELLC…LWDL), 172–214 (VLAS…GWDT), 219–258 (QIYCIENAHGQLVRDLDFNPNKQYYLASCGDDCKVKFWDT), and 263–302 (EPVKTLEEHSHWVWNVRYNHSHDQLVLTGSSDSRVILSNM). Residues 310-335 (FGHLVDDDDISDQEDHRSEEKSKEPL) are disordered. Residue Ser320 is modified to Phosphoserine. Over residues 322–335 (QEDHRSEEKSKEPL) the composition is skewed to basic and acidic residues. The WD 7 repeat unit spans residues 338–379 (NVIATYEEHEDSVYAVDWSSADPWLFASLSYDGRLVINRVPR).

Belongs to the WD repeat EIPR1 family. As to quaternary structure, interacts with two multisubunit tethering complexes: EARP composed of VPS50, VPS51, VPS52 and VPS53 subunits and GARP complex composed of VPS51, VPS52, VPS53 and VPS54 subunits. Interacts with SNAP29.

It localises to the golgi apparatus. It is found in the trans-Golgi network. Acts as a component of endosomal retrieval machinery that is involved in protein transport from early endosomes to either recycling endosomes or the trans-Golgi network. Mediates the recruitment of Golgi-associated retrograde protein (GARP) complex to the trans-Golgi network and controls early endosome-to-Golgi transport of internalized protein. Promotes the recycling of internalized transferrin receptor (TFRC) to the plasma membrane through interaction with endosome-associated recycling protein (EARP) complex. Controls proper insulin distribution and secretion, and retention of cargo in mature dense core vesicles. Required for the stability of the endosome-associated retrograde protein (EARP) complex subunits and for proper localization and association of EARP with membranes. The chain is EARP and GARP complex-interacting protein 1 from Homo sapiens (Human).